Consider the following 177-residue polypeptide: ATP synthase subunit delta (177 aa).

This sequence belongs to the ATPase delta chain family. As to quaternary structure, F-type ATPases have 2 components, F(1) - the catalytic core - and F(0) - the membrane proton channel. F(1) has five subunits: alpha(3), beta(3), gamma(1), delta(1), epsilon(1). F(0) has three main subunits: a(1), b(2) and c(10-14). The alpha and beta chains form an alternating ring which encloses part of the gamma chain. F(1) is attached to F(0) by a central stalk formed by the gamma and epsilon chains, while a peripheral stalk is formed by the delta and b chains.

The protein resides in the cell inner membrane. F(1)F(0) ATP synthase produces ATP from ADP in the presence of a proton or sodium gradient. F-type ATPases consist of two structural domains, F(1) containing the extramembraneous catalytic core and F(0) containing the membrane proton channel, linked together by a central stalk and a peripheral stalk. During catalysis, ATP synthesis in the catalytic domain of F(1) is coupled via a rotary mechanism of the central stalk subunits to proton translocation. Its function is as follows. This protein is part of the stalk that links CF(0) to CF(1). It either transmits conformational changes from CF(0) to CF(1) or is implicated in proton conduction. The protein is ATP synthase subunit delta of Tolumonas auensis (strain DSM 9187 / NBRC 110442 / TA 4).